A 453-amino-acid chain; its full sequence is tRNA modification GTPase MnmE (453 aa).

(6S)-5-formyl-5,6,7,8-tetrahydrofolate contacts are provided by Arg22, Glu79, and Lys119. The 162-residue stretch at 215-376 folds into the TrmE-type G domain; that stretch reads GMKVVIAGRP…LQQHLKSLMG (162 aa). Residue Asn225 coordinates K(+). GTP-binding positions include 225 to 230, 244 to 250, 269 to 272, and 334 to 337; these read NAGKSS, TEIAGTT, DTAG, and NKAD. Ser229 contributes to the Mg(2+) binding site. Residues Thr244, Ile246, and Thr249 each contribute to the K(+) site. Thr250 lines the Mg(2+) pocket. Lys453 serves as a coordination point for (6S)-5-formyl-5,6,7,8-tetrahydrofolate.

The protein belongs to the TRAFAC class TrmE-Era-EngA-EngB-Septin-like GTPase superfamily. TrmE GTPase family. As to quaternary structure, homodimer. Heterotetramer of two MnmE and two MnmG subunits. The cofactor is K(+).

It localises to the cytoplasm. Its function is as follows. Exhibits a very high intrinsic GTPase hydrolysis rate. Involved in the addition of a carboxymethylaminomethyl (cmnm) group at the wobble position (U34) of certain tRNAs, forming tRNA-cmnm(5)s(2)U34. In Shewanella sediminis (strain HAW-EB3), this protein is tRNA modification GTPase MnmE.